A 473-amino-acid polypeptide reads, in one-letter code: Photosystem II CP43 reaction center protein (473 aa).

Residues 1–14 constitute a propeptide that is removed on maturation; sequence MKTLYSLRRFYPVE. Thr-15 carries the post-translational modification N-acetylthreonine. Position 15 is a phosphothreonine (Thr-15). Helical transmembrane passes span 69-93, 134-155, 178-200, 255-275, and 291-312; these read LFEVAHFVPEKPMYEQGLILLPHLA, LLGPETLEESFPFFGYVWKDRN, KALYFGGVYDTWAPGGGDVRKIT, KPFAWARRAFVWSGEAYLSYS, and WFNNTAYPSEFYGPTGPEASQA. Glu-367 lines the [CaMn4O5] cluster pocket. A helical membrane pass occupies residues 447–471; that stretch reads RARAAAAGFEKGIDRDLEPVLSMTP.

Belongs to the PsbB/PsbC family. PsbC subfamily. PSII is composed of 1 copy each of membrane proteins PsbA, PsbB, PsbC, PsbD, PsbE, PsbF, PsbH, PsbI, PsbJ, PsbK, PsbL, PsbM, PsbT, PsbX, PsbY, PsbZ, Psb30/Ycf12, at least 3 peripheral proteins of the oxygen-evolving complex and a large number of cofactors. It forms dimeric complexes. Binds multiple chlorophylls and provides some of the ligands for the Ca-4Mn-5O cluster of the oxygen-evolving complex. It may also provide a ligand for a Cl- that is required for oxygen evolution. PSII binds additional chlorophylls, carotenoids and specific lipids. is required as a cofactor.

It is found in the plastid. The protein resides in the chloroplast thylakoid membrane. One of the components of the core complex of photosystem II (PSII). It binds chlorophyll and helps catalyze the primary light-induced photochemical processes of PSII. PSII is a light-driven water:plastoquinone oxidoreductase, using light energy to abstract electrons from H(2)O, generating O(2) and a proton gradient subsequently used for ATP formation. The protein is Photosystem II CP43 reaction center protein of Phalaenopsis aphrodite subsp. formosana (Moth orchid).